A 108-amino-acid polypeptide reads, in one-letter code: Large ribosomal subunit protein uL24 (108 aa).

It belongs to the universal ribosomal protein uL24 family. Part of the 50S ribosomal subunit.

In terms of biological role, one of two assembly initiator proteins, it binds directly to the 5'-end of the 23S rRNA, where it nucleates assembly of the 50S subunit. Its function is as follows. One of the proteins that surrounds the polypeptide exit tunnel on the outside of the subunit. This chain is Large ribosomal subunit protein uL24, found in Desulfosudis oleivorans (strain DSM 6200 / JCM 39069 / Hxd3) (Desulfococcus oleovorans).